A 236-amino-acid chain; its full sequence is MSQDSFKSYILKKFNISFNDESLLTEALTQRNYLNEHPDEKGRDYQRLEFLGDSVMQMIVAEYLFKRYPDWHEGQLTEMRIAMVQTRSFAHFSRMVHLNEGIRLGKGEEMSGARDRDSLLEDIWEAFIGALYLDQGADVVRQFLNQTLFAAIDTDFFDRFIDFKSRLQERLQTKGSVDIDYQTEKEEQLSDNTQLFEASVSANDKELARGTGKSIKDAEKAAARAALKILEDNVNL.

An RNase III domain is found at 7-136 (KSYILKKFNI…FIGALYLDQG (130 aa)). Glutamate 49 contacts Mg(2+). Aspartate 53 is a catalytic residue. Aspartate 122 and glutamate 125 together coordinate Mg(2+). The active site involves glutamate 125. The 71-residue stretch at 162–232 (DFKSRLQERL…ARAALKILED (71 aa)) folds into the DRBM domain.

Belongs to the ribonuclease III family. Homodimer. Mg(2+) is required as a cofactor.

Its subcellular location is the cytoplasm. It catalyses the reaction Endonucleolytic cleavage to 5'-phosphomonoester.. Its function is as follows. Digests double-stranded RNA. Involved in the processing of primary rRNA transcript to yield the immediate precursors to the large and small rRNAs (23S and 16S). Processes some mRNAs, and tRNAs when they are encoded in the rRNA operon. Processes pre-crRNA and tracrRNA of type II CRISPR loci if present in the organism. The protein is Ribonuclease 3 of Leuconostoc mesenteroides subsp. mesenteroides (strain ATCC 8293 / DSM 20343 / BCRC 11652 / CCM 1803 / JCM 6124 / NCDO 523 / NBRC 100496 / NCIMB 8023 / NCTC 12954 / NRRL B-1118 / 37Y).